The sequence spans 634 residues: MGKVIGIDLGTTNSCVAVMEGGEPVVIANAEGSRTTPSMVAFTENGERLVGQQAKRQAVTNPENTLFAIKRLIGRKFDSDAVRRDIQISPFEIVKADNGDAWVDVRDKKYSPPEISAMILQKMKQTAEDYLGEKVTDAVITVPAYFNDSQRQATKDAGKISGLNVLRIINEPTAASLAYGLDKKSEEKIAVFDLGGGTFDISILELGDGVFEVKSTNGDTFLGGEDFDQHIMDYVADEFKKEQGIDLRNDKMALQRLKEACEKAKCELSTSMETDINLPFITADQSGPKHLNLRLTRSKLESICSSLLAKLVEPCRMALKDAGLSASDVDEVLLVGGMTRMPAVQAKVQEIFGKTPNKGVNPDEVVAIGAAIQGGVLKGEVKDVLLLDVTPLSLGIETLGSIMTKLIEKNTTIPCKKSQIFSTAADNQPAVSVHVLQGEREMAGDNKTIGRFELVGIPPAPRGVPQVEVTFDIDANGILHVSAKDLGTGKEQSIRITASSGLSDEEIDKMVKDAEAHSSEDKKKREIIEARNQADGLAYSTEKSLKEHGDKIDEETRNNIQTALDALKAAMEGDDPEDIRQKSEALATASHKLAEAVYKQTQEGAEAASEAGEQSAGDEGVVDAEFEEVDEQNK.

At threonine 198 the chain carries Phosphothreonine; by autocatalysis. Positions 599–634 are disordered; that stretch reads KQTQEGAEAASEAGEQSAGDEGVVDAEFEEVDEQNK. Positions 602–619 are enriched in low complexity; sequence QEGAEAASEAGEQSAGDE. Residues 620–634 are compositionally biased toward acidic residues; sequence GVVDAEFEEVDEQNK.

This sequence belongs to the heat shock protein 70 family.

Acts as a chaperone. The protein is Chaperone protein DnaK of Syntrophotalea carbinolica (strain DSM 2380 / NBRC 103641 / GraBd1) (Pelobacter carbinolicus).